The primary structure comprises 196 residues: Thymidine kinase (196 aa).

Residues 9–16 (SAMNAGKS) and 88–91 (DEAQ) each bind ATP. E89 serves as the catalytic Proton acceptor. Zn(2+)-binding residues include C146, C148, C183, and H186.

The protein belongs to the thymidine kinase family. As to quaternary structure, homotetramer.

It localises to the cytoplasm. It carries out the reaction thymidine + ATP = dTMP + ADP + H(+). The sequence is that of Thymidine kinase from Coxiella burnetii (strain RSA 493 / Nine Mile phase I).